A 39-amino-acid chain; its full sequence is Photosystem II reaction center protein L (39 aa).

The helical transmembrane segment at 18-38 (SLYLGLLIVFTTGILFSSYFF) threads the bilayer.

The protein belongs to the PsbL family. As to quaternary structure, PSII is composed of 1 copy each of membrane proteins PsbA, PsbB, PsbC, PsbD, PsbE, PsbF, PsbH, PsbI, PsbJ, PsbK, PsbL, PsbM, PsbT, PsbX, PsbY, PsbZ, Psb30/Ycf12, peripheral proteins PsbO, CyanoQ (PsbQ), PsbU, PsbV and a large number of cofactors. It forms dimeric complexes.

The protein resides in the cellular thylakoid membrane. Functionally, one of the components of the core complex of photosystem II (PSII). PSII is a light-driven water:plastoquinone oxidoreductase that uses light energy to abstract electrons from H(2)O, generating O(2) and a proton gradient subsequently used for ATP formation. It consists of a core antenna complex that captures photons, and an electron transfer chain that converts photonic excitation into a charge separation. This subunit is found at the monomer-monomer interface and is required for correct PSII assembly and/or dimerization. The chain is Photosystem II reaction center protein L from Synechococcus sp. (strain CC9311).